We begin with the raw amino-acid sequence, 462 residues long: A-type ATP synthase subunit B (462 aa).

Belongs to the ATPase alpha/beta chains family. In terms of assembly, has multiple subunits with at least A(3), B(3), C, D, E, F, H, I and proteolipid K(x).

The protein localises to the cell membrane. Its function is as follows. Component of the A-type ATP synthase that produces ATP from ADP in the presence of a proton gradient across the membrane. The B chain is a regulatory subunit. In Methanococcus maripaludis (strain C7 / ATCC BAA-1331), this protein is A-type ATP synthase subunit B.